The chain runs to 233 residues: Transcriptional regulatory protein PrrA (233 aa).

One can recognise a Response regulatory domain in the interval 9–123 (RVLVVDDDSD…ELVARVKALL (115 aa)). At D58 the chain carries 4-aspartylphosphate. Positions 134–232 (SETITVGPLE…VRGVGFVLRM (99 aa)) form a DNA-binding region, ompR/PhoB-type.

Phosphorylated by PrrB at Asp-58.

The protein resides in the cytoplasm. In terms of biological role, member of the two-component regulatory system PrrB/PrrA that is involved specifically in early intracellular multiplication of Mycobacterium and is essential for its viability. Upon phosphorylation by PrrB, functions as a transcription regulator by direct binding to promoter regions of target genes to positively regulate their expression. Autoregulates its own expression. This is Transcriptional regulatory protein PrrA (prrA) from Mycobacterium bovis (strain ATCC BAA-935 / AF2122/97).